The chain runs to 149 residues: Large ribosomal subunit protein uL13 (149 aa).

This sequence belongs to the universal ribosomal protein uL13 family. As to quaternary structure, part of the 50S ribosomal subunit.

This protein is one of the early assembly proteins of the 50S ribosomal subunit, although it is not seen to bind rRNA by itself. It is important during the early stages of 50S assembly. This Borrelia recurrentis (strain A1) protein is Large ribosomal subunit protein uL13.